A 617-amino-acid polypeptide reads, in one-letter code: Vacuolar protein sorting-associated protein 33B (617 aa).

N-acetylalanine is present on Ala-2.

Belongs to the STXBP/unc-18/SEC1 family. As to quaternary structure, interacts with RAB11A and VIPAS39. Associates with adapter protein complex 3 (AP-3), clathrin:AP-3 and clathrin:HGS complexes. Phosphorylated on tyrosine residues.

It is found in the late endosome membrane. It localises to the lysosome membrane. The protein resides in the early endosome. Its subcellular location is the cytoplasmic vesicle. The protein localises to the clathrin-coated vesicle. It is found in the recycling endosome. Its function is as follows. May play a role in vesicle-mediated protein trafficking to lysosomal compartments and in membrane docking/fusion reactions of late endosomes/lysosomes. Required for proper trafficking and targeting of the collagen-modifying enzyme lysyl hydroxylase 3 (LH3) to intracellular collagen. Mediates phagolysosomal fusion in macrophages. Proposed to be involved in endosomal maturation implicating in part VIPAS39. In epithelial cells, the VPS33B:VIPAS39 complex may play a role in the apical RAB11A-dependentrecycling pathway and in the maintenance of the apical-basolateral polarity. Seems to be involved in the sorting of specific cargos from the trans-Golgi network to alpha-granule-destined multivesicular bodies (MVBs) promoting MVBs maturation in megakaryocytes. In Mus musculus (Mouse), this protein is Vacuolar protein sorting-associated protein 33B (Vps33b).